The chain runs to 709 residues: Protein IMPAIRED IN BABA-INDUCED STERILITY 1 (709 aa).

A lipid anchor (N-myristoyl glycine) is attached at Gly-2. Residues Ser-53–Ser-80 are disordered. Residues Phe-131–Phe-418 enclose the Protein kinase domain. ATP contacts are provided by residues Ile-137–Val-145 and Lys-160. Asp-255 functions as the Proton acceptor in the catalytic mechanism. 2 disordered regions span residues Ser-434 to Gly-536 and Ser-566 to Glu-609. Over residues Lys-437–Arg-449 the composition is skewed to basic and acidic residues. Residues His-484–His-494 show a composition bias toward basic residues. A compositionally biased stretch (polar residues) spans Ser-495–Thr-505. Composition is skewed to basic and acidic residues over residues Lys-509–His-523 and Val-586–Glu-609.

This sequence belongs to the protein kinase superfamily. Ser/Thr protein kinase family.

Required for beta-aminobutyric acid (BABA)-induced resistance (BABA-IR) against bacteria (e.g. P.syringae) and oomycetes (e.g. H.parasitica) via priming for salicylate (SA)-dependent defense responses such as pathogenesis-related PR-1 gene expression and trailing necrosis. Involved in BABA-mediated sterility. Necessary for the inheritance of BABA-priming to next generation, especially for the primed to be primed phenotype which consists in an enhanced second BABA-priming in transgenerationally primed plants. This chain is Protein IMPAIRED IN BABA-INDUCED STERILITY 1, found in Arabidopsis thaliana (Mouse-ear cress).